Consider the following 83-residue polypeptide: Small ribosomal subunit protein eS21 (83 aa).

The protein belongs to the eukaryotic ribosomal protein eS21 family. In terms of assembly, component of the 40S small ribosomal subunit.

It is found in the cytoplasm. The protein localises to the cytosol. It localises to the rough endoplasmic reticulum. In terms of biological role, component of the small ribosomal subunit. The ribosome is a large ribonucleoprotein complex responsible for the synthesis of proteins in the cell. This chain is Small ribosomal subunit protein eS21 (rps21), found in Xenopus laevis (African clawed frog).